The following is a 431-amino-acid chain: Trigger factor (431 aa).

In terms of domain architecture, PPIase FKBP-type spans 158 to 243 (GYLVALETWS…VIEVSEPVLL (86 aa)).

This sequence belongs to the FKBP-type PPIase family. Tig subfamily.

The protein resides in the cytoplasm. The enzyme catalyses [protein]-peptidylproline (omega=180) = [protein]-peptidylproline (omega=0). Its function is as follows. Involved in protein export. Acts as a chaperone by maintaining the newly synthesized protein in an open conformation. Functions as a peptidyl-prolyl cis-trans isomerase. This is Trigger factor from Xylella fastidiosa (strain M23).